Consider the following 205-residue polypeptide: Histidine biosynthesis bifunctional protein HisIE (205 aa).

Residues 1 to 116 are phosphoribosyl-AMP cyclohydrolase; that stretch reads MLKLKFNEEG…KVEKPLPFEV (116 aa). Residues 117 to 205 form a phosphoribosyl-ATP pyrophosphohydrolase region; sequence LPRLQDVIRE…VMEELIRRFK (89 aa).

In the N-terminal section; belongs to the PRA-CH family. It in the C-terminal section; belongs to the PRA-PH family.

It is found in the cytoplasm. It catalyses the reaction 1-(5-phospho-beta-D-ribosyl)-ATP + H2O = 1-(5-phospho-beta-D-ribosyl)-5'-AMP + diphosphate + H(+). The enzyme catalyses 1-(5-phospho-beta-D-ribosyl)-5'-AMP + H2O = 1-(5-phospho-beta-D-ribosyl)-5-[(5-phospho-beta-D-ribosylamino)methylideneamino]imidazole-4-carboxamide. It participates in amino-acid biosynthesis; L-histidine biosynthesis; L-histidine from 5-phospho-alpha-D-ribose 1-diphosphate: step 2/9. The protein operates within amino-acid biosynthesis; L-histidine biosynthesis; L-histidine from 5-phospho-alpha-D-ribose 1-diphosphate: step 3/9. This is Histidine biosynthesis bifunctional protein HisIE (hisI) from Aquifex aeolicus (strain VF5).